The chain runs to 311 residues: Acetaldehyde dehydrogenase (311 aa).

Cysteine 131 serves as the catalytic Acyl-thioester intermediate. NAD(+) contacts are provided by residues 162 to 170 (SVGPGTRKN) and asparagine 273.

This sequence belongs to the acetaldehyde dehydrogenase family.

It carries out the reaction acetaldehyde + NAD(+) + CoA = acetyl-CoA + NADH + H(+). The chain is Acetaldehyde dehydrogenase from Ralstonia pickettii (strain 12J).